A 186-amino-acid polypeptide reads, in one-letter code: Lipid A palmitoyltransferase PagP (186 aa).

The first 25 residues, 1 to 25, serve as a signal peptide directing secretion; that stretch reads MNVSKYVAIFSFVFIQLISVGKVFA. Catalysis depends on residues His-58, Asp-101, and Ser-102.

It belongs to the lipid A palmitoyltransferase family. In terms of assembly, homodimer.

It localises to the cell outer membrane. The enzyme catalyses lipid A (E. coli) + a 1-hexadecanoyl-2-acyl-sn-glycero-3-phosphocholine = hepta-acyl lipid A (E. coli) + a 2-acyl-sn-glycero-3-phosphocholine. The catalysed reaction is lipid IIA + a 1-hexadecanoyl-2-acyl-sn-glycero-3-phosphocholine = lipid IIB + a 2-acyl-sn-glycero-3-phosphocholine. It catalyses the reaction lipid IVA (E. coli) + a 1-hexadecanoyl-2-acyl-sn-glycero-3-phosphocholine = lipid IVB (E. coli) + a 2-acyl-sn-glycero-3-phosphocholine. Transfers a palmitate residue from the sn-1 position of a phospholipid to the N-linked hydroxymyristate on the proximal unit of lipid A or its precursors. The polypeptide is Lipid A palmitoyltransferase PagP (Escherichia coli (strain ATCC 55124 / KO11FL)).